Consider the following 347-residue polypeptide: Probable ribonucleotide transport ATP-binding protein mkl (347 aa).

In terms of domain architecture, ABC transporter spans 16–252 (IEVKGLTKSF…DEPVVRQFLN (237 aa)). 48 to 55 (GPSGTGKS) is an ATP binding site.

It belongs to the ABC transporter superfamily.

Not known, could be involved in the transport of ribonucleotides. The protein is Probable ribonucleotide transport ATP-binding protein mkl (mkl) of Mycobacterium leprae (strain TN).